The primary structure comprises 216 residues: Vesicle-associated membrane protein 7A (216 aa).

Over 1 to 189 (MSQTDILYAC…KRKLWWQNKK (189 aa)) the chain is Cytoplasmic. Residues 6-112 (ILYACVSYKG…ATYDPFIRVL (107 aa)) enclose the Longin domain. The v-SNARE coiled-coil homology domain occupies 126–186 (KMNLVMDQVS…VALKRKLWWQ (61 aa)). The chain crosses the membrane as a helical; Anchor for type IV membrane protein span at residues 190-210 (LAIAIGLVVCILIAVITLALL). Over 211-216 (KYFKVI) the chain is Vesicular.

This sequence belongs to the synaptobrevin family. Component of the SNARE complex composed of syn7A, syn8A, vamp7A and vti1A.

It is found in the cytoplasmic vesicle. The protein localises to the secretory vesicle membrane. It localises to the golgi apparatus. Its subcellular location is the trans-Golgi network membrane. The protein resides in the late endosome membrane. It is found in the lysosome membrane. The protein localises to the endoplasmic reticulum membrane. It localises to the phagosome membrane. Functionally, involved in the targeting and/or fusion of transport vesicles to their target membrane during transport of proteins from the early endosome to the lysosome. Required for heterotypic fusion of late endosomes with lysosomes and homotypic lysosomal fusion. Required for calcium regulated lysosomal exocytosis. In Dictyostelium discoideum (Social amoeba), this protein is Vesicle-associated membrane protein 7A.